The chain runs to 275 residues: Diaminopimelate epimerase (275 aa).

3 residues coordinate substrate: N12, Q45, and N65. C74 acts as the Proton donor in catalysis. Substrate-binding positions include 75-76 (GN), N158, N191, and 209-210 (ER). C218 functions as the Proton acceptor in the catalytic mechanism. 219–220 (GT) is a binding site for substrate.

This sequence belongs to the diaminopimelate epimerase family. Homodimer.

The protein resides in the cytoplasm. It carries out the reaction (2S,6S)-2,6-diaminopimelate = meso-2,6-diaminopimelate. It participates in amino-acid biosynthesis; L-lysine biosynthesis via DAP pathway; DL-2,6-diaminopimelate from LL-2,6-diaminopimelate: step 1/1. Functionally, catalyzes the stereoinversion of LL-2,6-diaminopimelate (L,L-DAP) to meso-diaminopimelate (meso-DAP), a precursor of L-lysine and an essential component of the bacterial peptidoglycan. The sequence is that of Diaminopimelate epimerase from Shewanella baltica (strain OS223).